Reading from the N-terminus, the 98-residue chain is NADH-ubiquinone oxidoreductase chain 4L (98 aa).

Transmembrane regions (helical) follow at residues 1 to 21, 29 to 49, and 59 to 79; these read MTTMFLNLLLAFTVALVGVFI, TLLCLEGMMLSIFIMVALILL, and LPLILLVFSACEAGVGLALLV.

This sequence belongs to the complex I subunit 4L family. In terms of assembly, core subunit of respiratory chain NADH dehydrogenase (Complex I) which is composed of 45 different subunits.

The protein localises to the mitochondrion inner membrane. The enzyme catalyses a ubiquinone + NADH + 5 H(+)(in) = a ubiquinol + NAD(+) + 4 H(+)(out). Functionally, core subunit of the mitochondrial membrane respiratory chain NADH dehydrogenase (Complex I) which catalyzes electron transfer from NADH through the respiratory chain, using ubiquinone as an electron acceptor. Part of the enzyme membrane arm which is embedded in the lipid bilayer and involved in proton translocation. This Ornithorhynchus anatinus (Duckbill platypus) protein is NADH-ubiquinone oxidoreductase chain 4L (MT-ND4L).